Consider the following 470-residue polypeptide: Uronate isomerase (470 aa).

It belongs to the metallo-dependent hydrolases superfamily. Uronate isomerase family.

It carries out the reaction D-glucuronate = D-fructuronate. The catalysed reaction is aldehydo-D-galacturonate = keto-D-tagaturonate. It participates in carbohydrate metabolism; pentose and glucuronate interconversion. This is Uronate isomerase from Vibrio vulnificus (strain CMCP6).